A 206-amino-acid chain; its full sequence is Ribosomal RNA large subunit methyltransferase E (206 aa).

Residues Gly-55, Trp-57, Asp-75, Asp-91, and Asp-116 each contribute to the S-adenosyl-L-methionine site. The active-site Proton acceptor is the Lys-156.

This sequence belongs to the class I-like SAM-binding methyltransferase superfamily. RNA methyltransferase RlmE family.

It is found in the cytoplasm. The enzyme catalyses uridine(2552) in 23S rRNA + S-adenosyl-L-methionine = 2'-O-methyluridine(2552) in 23S rRNA + S-adenosyl-L-homocysteine + H(+). Specifically methylates the uridine in position 2552 of 23S rRNA at the 2'-O position of the ribose in the fully assembled 50S ribosomal subunit. In Blochmanniella floridana, this protein is Ribosomal RNA large subunit methyltransferase E.